Reading from the N-terminus, the 723-residue chain is Fatty acid oxidation complex subunit alpha (723 aa).

The interval 1–189 (MIYQAETLQV…KIGLLDAVVD (189 aa)) is enoyl-CoA hydratase/isomerase. Asp-296 provides a ligand contact to substrate. The interval 311-723 (NKETQRAAVL…FYGAQQQGSI (413 aa)) is 3-hydroxyacyl-CoA dehydrogenase. NAD(+) contacts are provided by residues Met-325, Asp-344, 401-403 (VVE), Lys-408, and Ser-430. His-451 (for 3-hydroxyacyl-CoA dehydrogenase activity) is an active-site residue. Asn-454 is a binding site for NAD(+). Substrate is bound by residues Asn-501 and Tyr-661.

The protein in the N-terminal section; belongs to the enoyl-CoA hydratase/isomerase family. In the C-terminal section; belongs to the 3-hydroxyacyl-CoA dehydrogenase family. As to quaternary structure, heterotetramer of two alpha chains (FadB) and two beta chains (FadA).

The enzyme catalyses a (3S)-3-hydroxyacyl-CoA + NAD(+) = a 3-oxoacyl-CoA + NADH + H(+). It carries out the reaction a (3S)-3-hydroxyacyl-CoA = a (2E)-enoyl-CoA + H2O. The catalysed reaction is a 4-saturated-(3S)-3-hydroxyacyl-CoA = a (3E)-enoyl-CoA + H2O. It catalyses the reaction (3S)-3-hydroxybutanoyl-CoA = (3R)-3-hydroxybutanoyl-CoA. The enzyme catalyses a (3Z)-enoyl-CoA = a 4-saturated (2E)-enoyl-CoA. It carries out the reaction a (3E)-enoyl-CoA = a 4-saturated (2E)-enoyl-CoA. It functions in the pathway lipid metabolism; fatty acid beta-oxidation. Functionally, involved in the aerobic and anaerobic degradation of long-chain fatty acids via beta-oxidation cycle. Catalyzes the formation of 3-oxoacyl-CoA from enoyl-CoA via L-3-hydroxyacyl-CoA. It can also use D-3-hydroxyacyl-CoA and cis-3-enoyl-CoA as substrate. This Vibrio vulnificus (strain YJ016) protein is Fatty acid oxidation complex subunit alpha.